We begin with the raw amino-acid sequence, 319 residues long: MFNPQLNKNGELQHLLTIEGLPKANILHILDTASSFVSIGDREVKKVPLMRGKSVFNLFFENSTRTRTTFEIASKRLSADVINLNIQASSSSKGESLLDTIDNLSAMHADMFVVRHAQSGAPYLIAKHLSDTSQSHVHVVNAGDGRHAHPTQGLLDMYTIRHYKKDFSNLTVAIVGDILHSRVARSDIHALTTLGVPEIRAIGPRTLLPSGLEQMGVRVFTDINKGLKDVDVIIMLRLQNERMSGALLPSAQEFFKSYGLTTERLALAKPDAIVMHPGPMNRGVEIESAVADGTQAVILPQVTFGIAVRMAVMSILAGN.

Positions 65 and 66 each coordinate carbamoyl phosphate. Lys-93 is an L-aspartate binding site. Residues Arg-115, His-149, and Gln-152 each contribute to the carbamoyl phosphate site. L-aspartate-binding residues include Arg-182 and Arg-237. Carbamoyl phosphate-binding residues include Gly-278 and Pro-279.

It belongs to the aspartate/ornithine carbamoyltransferase superfamily. ATCase family. In terms of assembly, heterododecamer (2C3:3R2) of six catalytic PyrB chains organized as two trimers (C3), and six regulatory PyrI chains organized as three dimers (R2).

It catalyses the reaction carbamoyl phosphate + L-aspartate = N-carbamoyl-L-aspartate + phosphate + H(+). It participates in pyrimidine metabolism; UMP biosynthesis via de novo pathway; (S)-dihydroorotate from bicarbonate: step 2/3. In terms of biological role, catalyzes the condensation of carbamoyl phosphate and aspartate to form carbamoyl aspartate and inorganic phosphate, the committed step in the de novo pyrimidine nucleotide biosynthesis pathway. This is Aspartate carbamoyltransferase catalytic subunit from Janthinobacterium sp. (strain Marseille) (Minibacterium massiliensis).